The chain runs to 186 residues: dCTP deaminase (186 aa).

107–112 is a binding site for dCTP; sequence KSTYAR. The active-site Proton donor/acceptor is the Glu-133. Residues Gln-152, Tyr-166, Lys-175, and Gln-176 each contribute to the dCTP site.

Belongs to the dCTP deaminase family. As to quaternary structure, homotrimer.

It catalyses the reaction dCTP + H2O + H(+) = dUTP + NH4(+). It functions in the pathway pyrimidine metabolism; dUMP biosynthesis; dUMP from dCTP (dUTP route): step 1/2. Its function is as follows. Catalyzes the deamination of dCTP to dUTP. This Wolinella succinogenes (strain ATCC 29543 / DSM 1740 / CCUG 13145 / JCM 31913 / LMG 7466 / NCTC 11488 / FDC 602W) (Vibrio succinogenes) protein is dCTP deaminase.